The sequence spans 371 residues: Chorismate synthase (371 aa).

NADP(+) contacts are provided by Arg48 and Arg54. FMN-binding positions include 125–127 (RSS), 238–239 (NA), Gly278, 293–297 (KPTSS), and Arg319.

Belongs to the chorismate synthase family. Homotetramer. The cofactor is FMNH2.

The catalysed reaction is 5-O-(1-carboxyvinyl)-3-phosphoshikimate = chorismate + phosphate. The protein operates within metabolic intermediate biosynthesis; chorismate biosynthesis; chorismate from D-erythrose 4-phosphate and phosphoenolpyruvate: step 7/7. In terms of biological role, catalyzes the anti-1,4-elimination of the C-3 phosphate and the C-6 proR hydrogen from 5-enolpyruvylshikimate-3-phosphate (EPSP) to yield chorismate, which is the branch point compound that serves as the starting substrate for the three terminal pathways of aromatic amino acid biosynthesis. This reaction introduces a second double bond into the aromatic ring system. This Polynucleobacter asymbioticus (strain DSM 18221 / CIP 109841 / QLW-P1DMWA-1) (Polynucleobacter necessarius subsp. asymbioticus) protein is Chorismate synthase.